Reading from the N-terminus, the 157-residue chain is SUMO-conjugating enzyme UBC9 (157 aa).

An N-acetylserine modification is found at serine 2. Residues 4-157 (LCLQRLQEER…VLLQAKQYSK (154 aa)) enclose the UBC core domain. The active-site Glycyl thioester intermediate is cysteine 93.

The protein belongs to the ubiquitin-conjugating enzyme family. Interacts with SIZ1.

The protein resides in the nucleus. Its pathway is protein modification; protein sumoylation. In terms of biological role, E2 ubiquitin-like--protein ligase mediating SUMO/Smt3 attachment to septins and PCNA. Seems to be involved in degradation of S- (CLB5) and M-phase cyclins (CLB2). The sequence is that of SUMO-conjugating enzyme UBC9 (UBC9) from Saccharomyces cerevisiae (strain ATCC 204508 / S288c) (Baker's yeast).